Reading from the N-terminus, the 182-residue chain is UPF0397 protein BCAH187_A2708 (182 aa).

5 consecutive transmembrane segments (helical) span residues 9 to 29 (VVAI…GFSI), 40 to 60 (AILT…IGLI), 71 to 91 (WGIW…MGFI), 114 to 134 (ITGL…DIIV), and 142 to 162 (IVIQ…VLGL).

Belongs to the UPF0397 family.

It localises to the cell membrane. The protein is UPF0397 protein BCAH187_A2708 of Bacillus cereus (strain AH187).